Consider the following 306-residue polypeptide: Recombination-associated protein RdgC (306 aa).

It belongs to the RdgC family.

It is found in the cytoplasm. The protein localises to the nucleoid. In terms of biological role, may be involved in recombination. The sequence is that of Recombination-associated protein RdgC from Pseudomonas fluorescens (strain SBW25).